Reading from the N-terminus, the 371-residue chain is Cysteine endopeptidase Rep1 (371 aa).

The first 28 residues, 1 to 28 (MGRVISSWRVLAVVAALMAMAAVELCAA), serve as a signal peptide directing secretion. Positions 29–133 (IPFDERDLES…LPGFMYEGVR (105 aa)) are cleaved as a propeptide — activation peptide. Disulfide bonds link C156–C198, C190–C231, and C290–C342. The active site involves C159. N-linked (GlcNAc...) asparagine glycosylation occurs at N228. Active-site residues include H296 and N317.

It belongs to the peptidase C1 family. Expressed in germinating seeds.

Its subcellular location is the protein storage vacuole. In terms of biological role, cysteine endopeptidase that digests in vitro both the acidic and basic subunits of glutelin, the major seed storage protein of rice. Acts as a negative regulator of cell death. This Oryza sativa subsp. japonica (Rice) protein is Cysteine endopeptidase Rep1.